The sequence spans 285 residues: Mitochondrial substrate carrier family protein S (285 aa).

Topologically, residues 1-9 (MSTERGLKD) are mitochondrial intermembrane. Solcar repeat units follow at residues 4–87 (ERGL…MKVL), 96–183 (LTVG…CKRY), and 197–283 (LNLP…VIKL). Residues 10-30 (SIAGTVAGAACLFTGHPFDTI) form a helical membrane-spanning segment. Over 31 to 61 (RVRLQTSNTPIGIMECFRNTIKYEGFSGLYK) the chain is Mitochondrial matrix. The helical transmembrane segment at 62–82 (GVTSPLFGMMFETAVLFAGYG) threads the bilayer. Residues 83–101 (QMKVLLQKDENTPLTVGQC) are Mitochondrial intermembrane-facing. A helical transmembrane segment spans residues 102-122 (AIAGGFAGVGASVVLTPVELV). At 123-150 (KCRLQVQTTGPQKYKGSLDCLVQILKEG) the chain is on the mitochondrial matrix side. Residues 151 to 172 (GIRGAYRGFTPTIAREFVGNMA) form a helical membrane-spanning segment. Residues 173 to 199 (FFSTYETCKRYFKNKENKPNDDDELNL) lie on the Mitochondrial intermembrane side of the membrane. A helical transmembrane segment spans residues 200 to 220 (PALIISGGLGGMAYWTVLYPV). Residues 221 to 258 (DVAKSKIQISEGAGPSPSIVKVLKEIYSKEGVKGLFRG) are Mitochondrial matrix-facing. The chain crosses the membrane as a helical span at residues 259 to 277 (YTPTIIRSFPANAAMFSVY). Residues 278-285 (ELVIKLLG) are Mitochondrial intermembrane-facing.

The protein belongs to the mitochondrial carrier (TC 2.A.29) family.

Its subcellular location is the mitochondrion inner membrane. Functionally, mitochondrial solute carriers shuttle metabolites, nucleotides, and cofactors through the mitochondrial inner membrane. Mediates the transport of acylcarnitines of different length across the mitochondrial inner membrane from the cytosol to the mitochondrial matrix for their oxidation by the mitochondrial fatty acid-oxidation pathway. The polypeptide is Mitochondrial substrate carrier family protein S (mcfS) (Dictyostelium discoideum (Social amoeba)).